Reading from the N-terminus, the 285-residue chain is Transcription factor MYB15 (285 aa).

HTH myb-type domains follow at residues 9-61 (KMGL…MNYL) and 62-116 (KPDI…KKRL). 2 DNA-binding regions (H-T-H motif) span residues 37-61 (WRAL…MNYL) and 89-112 (WSAI…HTHL). A disordered region spans residues 115–172 (RLEDYQPAKPKTSNKKKGTKPKSESVITSSNSTRSESELADSSNPSGESLFSTSPSTS). Positions 139–158 (SVITSSNSTRSESELADSSN) are enriched in polar residues. Residues 159 to 172 (PSGESLFSTSPSTS) show a composition bias toward low complexity.

As to quaternary structure, interacts with SCRM/ICE1. As to expression, expressed in roots, leaves, stems and flowers. Expressed in stomatal guard cells.

The protein localises to the nucleus. Transcription factor involved in cold-regulation of CBF genes and in the development of freezing tolerance. May be part of a complex network of transcription factors controlling the expression of CBF genes and other genes in response to cold stress. Binds to the MYB recognition sequences in the promoters of CBF1, CBF2 and CBF3 genes. Involved in drought and salt tolerance. May enhance expression levels of genes involved in abscisic acid (ABA) biosynthesis and signaling, as well as those encoding stress-protective proteins. The chain is Transcription factor MYB15 from Arabidopsis thaliana (Mouse-ear cress).